Consider the following 261-residue polypeptide: Carnitinyl-CoA dehydratase (261 aa).

The active-site Nucleophile is glutamate 111. The Proton acceptor role is filled by glutamate 131.

This sequence belongs to the enoyl-CoA hydratase/isomerase family.

It carries out the reaction (R)-carnitinyl-CoA = crotonobetainyl-CoA + H2O. It functions in the pathway amine and polyamine metabolism; carnitine metabolism. Its function is as follows. Catalyzes the reversible dehydration of L-carnitinyl-CoA to crotonobetainyl-CoA. This is Carnitinyl-CoA dehydratase from Citrobacter koseri (strain ATCC BAA-895 / CDC 4225-83 / SGSC4696).